Reading from the N-terminus, the 62-residue chain is uncharacterized protein (62 aa).

Over residues 1–13 (MGESKSPQESSSE) the composition is skewed to polar residues. The segment at 1–62 (MGESKSPQES…SRREFRRKSG (62 aa)) is disordered. Positions 14–28 (GETKRKFREALDRKM) are enriched in basic and acidic residues.

This is an uncharacterized protein from Mycobacterium tuberculosis (strain ATCC 25618 / H37Rv).